The following is a 451-amino-acid chain: MSLAVVILAAGKGSRMNSNKPKVLQTLTGKTLIRHVLSRVEPLNPDNIIVVTGHLKEMVEADLADKKVTFVEQKEQLGTGHAVLQALPYIKEDKVLILYGDVPLISTDVLANLIKSASDDLAVLTAIVDNPTGLGRIIRDKFGAVSHIVEEKDATDGQRQIKEINTGMYCVAKSHLDDWLPNLGNTNAQGEYYLTDIVAMARGDNISITVTHPVEEFEIQGVNDRIQLAQLEREWQKHIAEVIMSKGVSVADPSRIDVRGKLEVGKDCWLDINVIIKGHVKLGNNVVIGANCILKNCTIEDNVKIKANSMVDGSIIREGAIVGPFARVRPECDVKEGAVIGNFVEAKKTILGRGSKASHLTYLGDSEIGANCNIGAGVITCNYDGVNKHKTTIGDYAFIGSDSQLIAPVNIGSGATIGAGSTIVSDVPADNLAISRARQRHIDTWQRPVKK.

Residues 1 to 225 form a pyrophosphorylase region; it reads MSLAVVILAA…EFEIQGVNDR (225 aa). UDP-N-acetyl-alpha-D-glucosamine-binding positions include 8 to 11, lysine 22, glutamine 73, 78 to 79, 99 to 101, glycine 135, glutamate 150, asparagine 165, and asparagine 223; these read LAAG, GT, and YGD. Position 101 (aspartate 101) interacts with Mg(2+). Asparagine 223 is a Mg(2+) binding site. The tract at residues 226–246 is linker; that stretch reads IQLAQLEREWQKHIAEVIMSK. The interval 247–451 is N-acetyltransferase; it reads GVSVADPSRI…IDTWQRPVKK (205 aa). UDP-N-acetyl-alpha-D-glucosamine contacts are provided by arginine 329 and lysine 347. Histidine 359 serves as the catalytic Proton acceptor. UDP-N-acetyl-alpha-D-glucosamine-binding residues include tyrosine 362 and asparagine 373. Acetyl-CoA contacts are provided by residues alanine 376, 382-383, serine 401, alanine 419, and arginine 436; that span reads NY.

It in the N-terminal section; belongs to the N-acetylglucosamine-1-phosphate uridyltransferase family. The protein in the C-terminal section; belongs to the transferase hexapeptide repeat family. Homotrimer. It depends on Mg(2+) as a cofactor.

Its subcellular location is the cytoplasm. It carries out the reaction alpha-D-glucosamine 1-phosphate + acetyl-CoA = N-acetyl-alpha-D-glucosamine 1-phosphate + CoA + H(+). The catalysed reaction is N-acetyl-alpha-D-glucosamine 1-phosphate + UTP + H(+) = UDP-N-acetyl-alpha-D-glucosamine + diphosphate. Its pathway is nucleotide-sugar biosynthesis; UDP-N-acetyl-alpha-D-glucosamine biosynthesis; N-acetyl-alpha-D-glucosamine 1-phosphate from alpha-D-glucosamine 6-phosphate (route II): step 2/2. It functions in the pathway nucleotide-sugar biosynthesis; UDP-N-acetyl-alpha-D-glucosamine biosynthesis; UDP-N-acetyl-alpha-D-glucosamine from N-acetyl-alpha-D-glucosamine 1-phosphate: step 1/1. It participates in bacterial outer membrane biogenesis; LPS lipid A biosynthesis. Catalyzes the last two sequential reactions in the de novo biosynthetic pathway for UDP-N-acetylglucosamine (UDP-GlcNAc). The C-terminal domain catalyzes the transfer of acetyl group from acetyl coenzyme A to glucosamine-1-phosphate (GlcN-1-P) to produce N-acetylglucosamine-1-phosphate (GlcNAc-1-P), which is converted into UDP-GlcNAc by the transfer of uridine 5-monophosphate (from uridine 5-triphosphate), a reaction catalyzed by the N-terminal domain. The protein is Bifunctional protein GlmU of Francisella philomiragia subsp. philomiragia (strain ATCC 25017 / CCUG 19701 / FSC 153 / O#319-036).